The following is a 145-amino-acid chain: Small ribosomal subunit protein uS19 (145 aa).

An N-acetylalanine modification is found at alanine 2. Residue lysine 108 forms a Glycyl lysine isopeptide (Lys-Gly) (interchain with G-Cter in SUMO2) linkage.

It belongs to the universal ribosomal protein uS19 family. Component of the small ribosomal subunit.

Its subcellular location is the cytoplasm. In terms of biological role, component of the small ribosomal subunit. The ribosome is a large ribonucleoprotein complex responsible for the synthesis of proteins in the cell. The chain is Small ribosomal subunit protein uS19 (RPS15) from Bos taurus (Bovine).